A 505-amino-acid polypeptide reads, in one-letter code: Lysine--tRNA ligase 1 (505 aa).

2 residues coordinate Mg(2+): D415 and E422.

Belongs to the class-II aminoacyl-tRNA synthetase family. As to quaternary structure, homodimer. Requires Mg(2+) as cofactor.

It is found in the cytoplasm. It carries out the reaction tRNA(Lys) + L-lysine + ATP = L-lysyl-tRNA(Lys) + AMP + diphosphate. This Mycobacterium bovis (strain ATCC BAA-935 / AF2122/97) protein is Lysine--tRNA ligase 1 (lysS1).